The sequence spans 530 residues: Calcium-dependent protein kinase 14 (530 aa).

Glycine 2 carries the N-myristoyl glycine lipid modification. Positions tyrosine 54–isoleucine 312 constitute a Protein kinase domain. ATP is bound by residues leucine 60–threonine 68 and lysine 83. Catalysis depends on aspartate 178, which acts as the Proton acceptor. Position 218 is a phosphoserine (serine 218). The autoinhibitory domain stretch occupies residues alanine 318–isoleucine 348. 4 EF-hand domains span residues glutamate 355–valine 390, valine 391–leucine 426, glycine 427–threonine 462, and threonine 463–tryptophan 498. Residues aspartate 368, serine 370, lysine 374, glutamate 379, aspartate 404, aspartate 406, aspartate 408, tyrosine 410, glutamate 415, aspartate 440, asparagine 442, serine 444, tyrosine 446, glutamate 451, aspartate 476, asparagine 478, aspartate 480, and lysine 482 each contribute to the Ca(2+) site. A Phosphoserine modification is found at serine 484. Position 487 (glutamate 487) interacts with Ca(2+).

It belongs to the protein kinase superfamily. Ser/Thr protein kinase family. CDPK subfamily.

It localises to the membrane. The catalysed reaction is L-seryl-[protein] + ATP = O-phospho-L-seryl-[protein] + ADP + H(+). It catalyses the reaction L-threonyl-[protein] + ATP = O-phospho-L-threonyl-[protein] + ADP + H(+). Its activity is regulated as follows. Activated by calcium. Autophosphorylation may play an important role in the regulation of the kinase activity. Functionally, may play a role in signal transduction pathways that involve calcium as a second messenger. This chain is Calcium-dependent protein kinase 14 (CPK14), found in Arabidopsis thaliana (Mouse-ear cress).